The primary structure comprises 629 residues: MKNLGFSKKILLAAALIVVVAFSVFIVINDYRQRQSLKSSVKSELQQLGTLTTQNIQTWLESRIQLLQSMSQQVAVDGKELPQLQRAIGLPTYSDNFQLSYFGSTEGVMFSVPAGNRPADYDPRARGWYKAAQNAPGTIVTEPYIAASSGKLVMTIATPVKIQNQLAGVAGADISLDSVSKIINSLNFDGHGYAFLVSAEGKILVHPDSKLVLKNINEAYPVNTPKIATGVTEIDSGKQPEIISFTPVQGVATANWYVALVLEQDSAYAMLTEFRTSAITAMVVVVMVIILLLGPLIRVLMQPLHQMGRAMRDIADGEGDLTKRLAITSHDEFGALAESFNHFVERIHTSIREVASTAAQLGEVATRVVKVSNASMSNSDQQANRTESVAAAINELGAAAQEIAQNAARTSQQSSDASGLASDGQGVVQQTIKAMNELSGKISESCVNIESLNGKTANIGQILEVITSISQQTNLLALNAAIEAARAGEAGRGFAVVADEVRNLAHRTQDSAQQVQKMIEELQVGAREAVVNMTESQRQSEDSVGIANLAGERLGSVTRRIEEINGMNQSVAAATEEQTSVVESINVDITHINTLNQQGVDNLRQTLEACNSLEEQAARLQQLVGSFRI.

Residues Met1 to Lys9 lie on the Cytoplasmic side of the membrane. The helical transmembrane segment at Ile10–Asp30 threads the bilayer. Residues Tyr31–Thr276 lie on the Periplasmic side of the membrane. The Cache domain occupies Ser36–Val258. Residues Ser277–Ile297 form a helical membrane-spanning segment. One can recognise an HAMP domain in the interval Arg298–Arg352. The Cytoplasmic segment spans residues Arg298 to Ile629. The 237-residue stretch at Thr357–Asn593 folds into the Methyl-accepting transducer domain.

The protein belongs to the methyl-accepting chemotaxis (MCP) protein family.

The protein localises to the cell inner membrane. In terms of biological role, chemotactic-signal transducers respond to changes in the concentration of attractants and repellents in the environment, transduce a signal from the outside to the inside of the cell, and facilitate sensory adaptation through the variation of the level of methylation. PscA recognizes specifically and with high affinity L-Asp, D-Asp and L-Glu. It exerts a double function, in mediating chemotaxis to these amino acids and in modulating cyclic di-GMP (c-di-GMP) levels, causing alterations in biofilm development. Plays a key role in the infection process. It may facilitate bacterial entry into the plant. This chain is Methyl-accepting chemotaxis protein PscA, found in Pseudomonas syringae pv. tomato (strain ATCC BAA-871 / DC3000).